The following is a 1190-amino-acid chain: DNA-directed RNA polymerase subunit beta (1190 aa).

Belongs to the RNA polymerase beta chain family. As to quaternary structure, the RNAP catalytic core consists of 2 alpha, 1 beta, 1 beta' and 1 omega subunit. When a sigma factor is associated with the core the holoenzyme is formed, which can initiate transcription.

The catalysed reaction is RNA(n) + a ribonucleoside 5'-triphosphate = RNA(n+1) + diphosphate. Functionally, DNA-dependent RNA polymerase catalyzes the transcription of DNA into RNA using the four ribonucleoside triphosphates as substrates. The protein is DNA-directed RNA polymerase subunit beta of Geobacillus thermodenitrificans (strain NG80-2).